Consider the following 366-residue polypeptide: UDP-N-acetylglucosamine--N-acetylmuramyl-(pentapeptide) pyrophosphoryl-undecaprenol N-acetylglucosamine transferase (366 aa).

UDP-N-acetyl-alpha-D-glucosamine contacts are provided by residues 14-16, N125, R168, S196, and Q297; that span reads TGG.

Belongs to the glycosyltransferase 28 family. MurG subfamily.

The protein resides in the cell inner membrane. The catalysed reaction is di-trans,octa-cis-undecaprenyl diphospho-N-acetyl-alpha-D-muramoyl-L-alanyl-D-glutamyl-meso-2,6-diaminopimeloyl-D-alanyl-D-alanine + UDP-N-acetyl-alpha-D-glucosamine = di-trans,octa-cis-undecaprenyl diphospho-[N-acetyl-alpha-D-glucosaminyl-(1-&gt;4)]-N-acetyl-alpha-D-muramoyl-L-alanyl-D-glutamyl-meso-2,6-diaminopimeloyl-D-alanyl-D-alanine + UDP + H(+). Its pathway is cell wall biogenesis; peptidoglycan biosynthesis. Cell wall formation. Catalyzes the transfer of a GlcNAc subunit on undecaprenyl-pyrophosphoryl-MurNAc-pentapeptide (lipid intermediate I) to form undecaprenyl-pyrophosphoryl-MurNAc-(pentapeptide)GlcNAc (lipid intermediate II). The protein is UDP-N-acetylglucosamine--N-acetylmuramyl-(pentapeptide) pyrophosphoryl-undecaprenol N-acetylglucosamine transferase of Rhodopseudomonas palustris (strain ATCC BAA-98 / CGA009).